The sequence spans 1066 residues: Ribosomal protein S6 kinase delta-1 (1066 aa).

In terms of domain architecture, PX spans 8 to 132 (SADLARFYTV…DFFKGGIIND (125 aa)). The tract at residues 207 to 228 (VASDSEQSKTEEERESRSLFPG) is disordered. Over residues 212 to 223 (EQSKTEEERESR) the composition is skewed to basic and acidic residues. Residues 277-305 (VQGESSPTRREAVKRRTAEYLMRAESISS) enclose the MIT domain. Residues Ser-282, Ser-423, Ser-427, Ser-449, and Ser-455 each carry the phosphoserine modification. Residues 344 to 445 (GVIDKVLLVM…PTLAKVHLQQ (102 aa)) form the Protein kinase 1 domain. Positions 441-509 (VHLQQPTSSP…SGSSSEEECT (69 aa)) are disordered. Over residues 448-458 (SSPQDSSSFES) the composition is skewed to low complexity. A compositionally biased stretch (polar residues) spans 474-483 (SSLTPSSQDD). Low complexity predominate over residues 492 to 503 (DSSPKWPDSGSS). 10 positions are modified to phosphoserine: Ser-494, Ser-528, Ser-583, Ser-605, Ser-608, Ser-640, Ser-661, Ser-664, Ser-667, and Ser-794. Residues 553 to 596 (HLAADSDSPSTQLRAHELKFFPNDDPEAVSSPRTSDSLSRSKNS) form a disordered region. The span at 582-593 (SSPRTSDSLSRS) shows a compositional bias: low complexity. Residues 794 to 1056 (SSDPKFQGLG…VEDIKSHPFF (263 aa)) enclose the Protein kinase 2 domain. ATP is bound by residues 801–809 (GLGVVESAV) and Arg-820. The residue at position 872 (Ser-872) is a Phosphoserine. The active-site Proton acceptor is the Asp-929.

Belongs to the protein kinase superfamily. Ser/Thr protein kinase family. S6 kinase subfamily. Interacts with SPHK1 and phosphatidylinositol 3-phosphate. Interacts (via PX domain) with PRDX3. As to expression, highly expressed in testis, skeletal muscle, brain, heart, placenta, kidney and liver and weakly expressed in thymus, small intestine, lung and colon.

Its subcellular location is the cytoplasm. The protein localises to the membrane. The protein resides in the early endosome. The catalysed reaction is L-seryl-[protein] + ATP = O-phospho-L-seryl-[protein] + ADP + H(+). The enzyme catalyses L-threonyl-[protein] + ATP = O-phospho-L-threonyl-[protein] + ADP + H(+). In terms of biological role, may be involved in transmitting sphingosine-1 phosphate (SPP)-mediated signaling into the cell. Plays a role in the recruitment of PRDX3 to early endosomes. The chain is Ribosomal protein S6 kinase delta-1 (RPS6KC1) from Homo sapiens (Human).